The sequence spans 53 residues: Toxin CjTL7 (53 aa).

The N-terminal stretch at 1 to 22 (MMIKVLLLLSSALVLFTPEAEG) is a signal peptide. Position 51 is a tryptophan amide (W51).

Post-translationally, contains 4 disulfide bonds.

The protein localises to the secreted. It is found in the nematocyst. Functionally, in vivo, only causes a weak change in behavior in shrimps (C.multidentata) (slight twitching of the walking legs), but no lethal effect is observed. No activity is observed when injected into fly larvae (M.domestica). The polypeptide is Toxin CjTL7 (Epiactis japonica (Sea anemone)).